The primary structure comprises 175 residues: Crossover junction endodeoxyribonuclease RuvC (175 aa).

Residues Asp8, Glu67, and Asp139 contribute to the active site. 3 residues coordinate Mg(2+): Asp8, Glu67, and Asp139.

Belongs to the RuvC family. As to quaternary structure, homodimer which binds Holliday junction (HJ) DNA. The HJ becomes 2-fold symmetrical on binding to RuvC with unstacked arms; it has a different conformation from HJ DNA in complex with RuvA. In the full resolvosome a probable DNA-RuvA(4)-RuvB(12)-RuvC(2) complex forms which resolves the HJ. The cofactor is Mg(2+).

Its subcellular location is the cytoplasm. The catalysed reaction is Endonucleolytic cleavage at a junction such as a reciprocal single-stranded crossover between two homologous DNA duplexes (Holliday junction).. Functionally, the RuvA-RuvB-RuvC complex processes Holliday junction (HJ) DNA during genetic recombination and DNA repair. Endonuclease that resolves HJ intermediates. Cleaves cruciform DNA by making single-stranded nicks across the HJ at symmetrical positions within the homologous arms, yielding a 5'-phosphate and a 3'-hydroxyl group; requires a central core of homology in the junction. The consensus cleavage sequence is 5'-(A/T)TT(C/G)-3'. Cleavage occurs on the 3'-side of the TT dinucleotide at the point of strand exchange. HJ branch migration catalyzed by RuvA-RuvB allows RuvC to scan DNA until it finds its consensus sequence, where it cleaves and resolves the cruciform DNA. In Marinobacter nauticus (strain ATCC 700491 / DSM 11845 / VT8) (Marinobacter aquaeolei), this protein is Crossover junction endodeoxyribonuclease RuvC.